Here is a 76-residue protein sequence, read N- to C-terminus: UPF0248 protein MMP0286 (76 aa).

This sequence belongs to the UPF0248 family.

In Methanococcus maripaludis (strain DSM 14266 / JCM 13030 / NBRC 101832 / S2 / LL), this protein is UPF0248 protein MMP0286.